Reading from the N-terminus, the 232-residue chain is GTP cyclohydrolase III (232 aa).

The protein belongs to the archaeal-type GTP cyclohydrolase family.

The catalysed reaction is GTP + 3 H2O = 2-amino-5-formylamino-6-(5-phospho-D-ribosylamino)pyrimidin-4(3H)-one + 2 phosphate + 2 H(+). In terms of biological role, catalyzes the formation of 2-amino-5-formylamino-6-ribofuranosylamino-4(3H)-pyrimidinone ribonucleotide monophosphate and inorganic phosphate from GTP. Also has an independent pyrophosphate phosphohydrolase activity. In Saccharolobus islandicus (strain Y.N.15.51 / Yellowstone #2) (Sulfolobus islandicus), this protein is GTP cyclohydrolase III.